We begin with the raw amino-acid sequence, 348 residues long: L-threonine 3-dehydrogenase (348 aa).

Zn(2+) is bound at residue Cys42. Catalysis depends on charge relay system residues Thr44 and His47. His67, Glu68, Cys97, Cys100, Cys103, and Cys111 together coordinate Zn(2+). Residues Leu179, Glu199, Arg204, 266–268 (LGL), and 291–292 (IT) each bind NAD(+).

Belongs to the zinc-containing alcohol dehydrogenase family. Homodimer. Homotetramer; dimer of dimers. The cofactor is Zn(2+).

The protein resides in the cytoplasm. It carries out the reaction L-threonine + NAD(+) = (2S)-2-amino-3-oxobutanoate + NADH + H(+). The protein operates within amino-acid degradation; L-threonine degradation via oxydo-reductase pathway; glycine from L-threonine: step 1/2. Is totally inhibited by EDTA in vitro. Its function is as follows. Catalyzes the NAD(+)-dependent oxidation of L-threonine to 2-amino-3-ketobutyrate. Is much less efficient when using NADP(+) instead of NAD(+). To a lesser extent, also catalyzes the oxidation of L-serine and DL-threo-3-phenylserine, but not that of L-allo-threonine, D-threonine and D-allo-threonine and many other L-amino acids. The polypeptide is L-threonine 3-dehydrogenase (Pyrococcus horikoshii (strain ATCC 700860 / DSM 12428 / JCM 9974 / NBRC 100139 / OT-3)).